Here is a 156-residue protein sequence, read N- to C-terminus: Small ribosomal subunit protein uS7 (156 aa).

Belongs to the universal ribosomal protein uS7 family. Part of the 30S ribosomal subunit. Contacts proteins S9 and S11.

Functionally, one of the primary rRNA binding proteins, it binds directly to 16S rRNA where it nucleates assembly of the head domain of the 30S subunit. Is located at the subunit interface close to the decoding center, probably blocks exit of the E-site tRNA. The polypeptide is Small ribosomal subunit protein uS7 (Enterobacter sp. (strain 638)).